Consider the following 942-residue polypeptide: Lambda-carrageenase (942 aa).

Residues 1-25 (MKIKILSAMIASSLLIGCVIPTVKA) form the signal peptide.

Monomer.

The protein resides in the secreted. It catalyses the reaction Endohydrolysis of (1-&gt;4)-beta-linkages in the backbone of lambda-carrageenan, resulting in the tetrasaccharide alpha-D-Galp2,6S2-(1-&gt;3)-beta-D-Galp2S-(1-&gt;4)-alpha-D-Galp2,6S2-(1-&gt;3)-D-Galp2S.. Its function is as follows. Hydrolyzes lambda-carrageenan with inversion of anomeric configuration. Does not hydrolyze iota- and kappa-carrageenans, agarose or porphyran. The chain is Lambda-carrageenase from Pseudoalteromonas sp.